Consider the following 251-residue polypeptide: Aspartate/glutamate leucyltransferase (251 aa).

Belongs to the R-transferase family. Bpt subfamily.

The protein resides in the cytoplasm. The enzyme catalyses N-terminal L-glutamyl-[protein] + L-leucyl-tRNA(Leu) = N-terminal L-leucyl-L-glutamyl-[protein] + tRNA(Leu) + H(+). The catalysed reaction is N-terminal L-aspartyl-[protein] + L-leucyl-tRNA(Leu) = N-terminal L-leucyl-L-aspartyl-[protein] + tRNA(Leu) + H(+). Functions in the N-end rule pathway of protein degradation where it conjugates Leu from its aminoacyl-tRNA to the N-termini of proteins containing an N-terminal aspartate or glutamate. The protein is Aspartate/glutamate leucyltransferase of Xanthomonas euvesicatoria pv. vesicatoria (strain 85-10) (Xanthomonas campestris pv. vesicatoria).